A 255-amino-acid polypeptide reads, in one-letter code: Imidazole glycerol phosphate synthase subunit HisF (255 aa).

Catalysis depends on residues D12 and D131.

It belongs to the HisA/HisF family. Heterodimer of HisH and HisF.

Its subcellular location is the cytoplasm. The enzyme catalyses 5-[(5-phospho-1-deoxy-D-ribulos-1-ylimino)methylamino]-1-(5-phospho-beta-D-ribosyl)imidazole-4-carboxamide + L-glutamine = D-erythro-1-(imidazol-4-yl)glycerol 3-phosphate + 5-amino-1-(5-phospho-beta-D-ribosyl)imidazole-4-carboxamide + L-glutamate + H(+). It functions in the pathway amino-acid biosynthesis; L-histidine biosynthesis; L-histidine from 5-phospho-alpha-D-ribose 1-diphosphate: step 5/9. Functionally, IGPS catalyzes the conversion of PRFAR and glutamine to IGP, AICAR and glutamate. The HisF subunit catalyzes the cyclization activity that produces IGP and AICAR from PRFAR using the ammonia provided by the HisH subunit. The sequence is that of Imidazole glycerol phosphate synthase subunit HisF from Ruthia magnifica subsp. Calyptogena magnifica.